A 611-amino-acid polypeptide reads, in one-letter code: Serine protease FAM111A (611 aa).

A PIP-box motif is present at residues 16-28 (KCNMKIEHYFSPV). Lys-20 participates in a covalent cross-link: Glycyl lysine isopeptide (Lys-Gly) (interchain with G-Cter in SUMO2). Ser-26 carries the post-translational modification Phosphoserine. Residues Lys-30 and Lys-65 each participate in a glycyl lysine isopeptide (Lys-Gly) (interchain with G-Cter in SUMO2) cross-link. A disordered region spans residues 44-73 (ESRGDPRATTNTQAQRFHSPKKNPEDQTMP). The interaction with SV40 large T antigen stretch occupies residues 336-611 (KVTKNSSSIK…DVEMMSDEDL (276 aa)). Residues His-385, Asp-439, and Ser-541 each act as charge relay system in the active site.

Belongs to the FAM111 family. Interacts (via PIP-box) with PCNA; then interaction is direct. In terms of assembly, (Microbial infection) Interacts with SV40 virus large T antigen and this interaction is required for efficient viral replication and sustained viral gene expression in restrictive cell types. As to quaternary structure, (Microbial infection) Interacts with vaccinia virus protein OPG079; this interaction promotes the degradation of OPG079. In terms of processing, autocatalytically cleaved; activating the protein. Autocatalytic cleavage takes place in trans.

The protein localises to the nucleus. The protein resides in the chromosome. It is found in the cytoplasm. Functionally, single-stranded DNA-binding serine protease that mediates the proteolytic cleavage of covalent DNA-protein cross-links (DPCs) during DNA synthesis, thereby playing a key role in maintaining genomic integrity. DPCs are highly toxic DNA lesions that interfere with essential chromatin transactions, such as replication and transcription, and which are induced by reactive agents, such as UV light or formaldehyde. Protects replication fork from stalling by removing DPCs, such as covalently trapped topoisomerase 1 (TOP1) adducts on DNA lesion, or poly(ADP-ribose) polymerase 1 (PARP1)-DNA complexes trapped by PARP inhibitors. Required for PCNA loading on replication sites. Promotes S-phase entry and DNA synthesis. Also acts as a restriction factor for some viruses including SV40 polyomavirus and vaccinia virus. Mechanistically, affects nuclear barrier function during viral replication by mediating the disruption of the nuclear pore complex (NPC) via its protease activity. In turn, interacts with vaccinia virus DNA-binding protein OPG079 in the cytoplasm and promotes its degradation without the need of its protease activity but through autophagy. The sequence is that of Serine protease FAM111A from Homo sapiens (Human).